A 427-amino-acid chain; its full sequence is Acyltransferase fer5 (427 aa).

Positions 1 to 24 (MTAATSVQPSPAPRQPGLRATFNP) are disordered. His342 contributes to the substrate binding site. Residue Glu380 is the Proton acceptor of the active site.

It belongs to the lysine N-acyltransferase mbtK family.

Its pathway is siderophore biosynthesis. Functionally, acyltransferase; part of the gene cluster that mediates the biosynthesis of siderophore ferrichrome A which is contributing to organismal virulence. The first step of ferrichrome A biosynthesis is performed by the HMG-CoA synthase hcs1 which catalyzes the generation of HMG-CoA and CoA using acetoacetyl-CoA and acetyl-CoA as substrates. The enoyl-CoA isomerase/hydratase fer4 then catalyzes the conversion of hcs1-produced HMG-CoA to methylglutaconyl-CoA. The acyltransferase fer5 then fuses the fer4-generated methylglutaconyl-CoA with sid1-generated hydroxyornithine to yield methylglutaconyl hydroxyornithine. Methylglutaconyl hydroxyornithine is then available for use by the NRPS fer3 to generate ferrichrome A. This is Acyltransferase fer5 from Mycosarcoma maydis (Corn smut fungus).